Reading from the N-terminus, the 565-residue chain is Dihydroxy-acid dehydratase (565 aa).

Residue Cys53 participates in [2Fe-2S] cluster binding. Residue Asp85 coordinates Mg(2+). Cys126 contacts [2Fe-2S] cluster. Mg(2+) contacts are provided by Asp127 and Lys128. Lys128 is modified (N6-carboxylysine). A [2Fe-2S] cluster-binding site is contributed by Cys198. Glu450 provides a ligand contact to Mg(2+). Catalysis depends on Ser476, which acts as the Proton acceptor.

This sequence belongs to the IlvD/Edd family. In terms of assembly, homodimer. The cofactor is [2Fe-2S] cluster. Requires Mg(2+) as cofactor.

The catalysed reaction is (2R)-2,3-dihydroxy-3-methylbutanoate = 3-methyl-2-oxobutanoate + H2O. It catalyses the reaction (2R,3R)-2,3-dihydroxy-3-methylpentanoate = (S)-3-methyl-2-oxopentanoate + H2O. It functions in the pathway amino-acid biosynthesis; L-isoleucine biosynthesis; L-isoleucine from 2-oxobutanoate: step 3/4. Its pathway is amino-acid biosynthesis; L-valine biosynthesis; L-valine from pyruvate: step 3/4. Its function is as follows. Functions in the biosynthesis of branched-chain amino acids. Catalyzes the dehydration of (2R,3R)-2,3-dihydroxy-3-methylpentanoate (2,3-dihydroxy-3-methylvalerate) into 2-oxo-3-methylpentanoate (2-oxo-3-methylvalerate) and of (2R)-2,3-dihydroxy-3-methylbutanoate (2,3-dihydroxyisovalerate) into 2-oxo-3-methylbutanoate (2-oxoisovalerate), the penultimate precursor to L-isoleucine and L-valine, respectively. The sequence is that of Dihydroxy-acid dehydratase from Synechococcus sp. (strain JA-3-3Ab) (Cyanobacteria bacterium Yellowstone A-Prime).